Reading from the N-terminus, the 456-residue chain is Histidine--tRNA ligase (456 aa).

Belongs to the class-II aminoacyl-tRNA synthetase family. In terms of assembly, homodimer.

The protein localises to the cytoplasm. It carries out the reaction tRNA(His) + L-histidine + ATP = L-histidyl-tRNA(His) + AMP + diphosphate + H(+). The protein is Histidine--tRNA ligase of Borreliella afzelii (strain PKo) (Borrelia afzelii).